The following is a 122-amino-acid chain: Ribosome-binding factor A (122 aa).

This sequence belongs to the RbfA family. As to quaternary structure, monomer. Binds 30S ribosomal subunits, but not 50S ribosomal subunits or 70S ribosomes.

Its subcellular location is the cytoplasm. In terms of biological role, one of several proteins that assist in the late maturation steps of the functional core of the 30S ribosomal subunit. Associates with free 30S ribosomal subunits (but not with 30S subunits that are part of 70S ribosomes or polysomes). Required for efficient processing of 16S rRNA. May interact with the 5'-terminal helix region of 16S rRNA. This is Ribosome-binding factor A from Halothermothrix orenii (strain H 168 / OCM 544 / DSM 9562).